Reading from the N-terminus, the 257-residue chain is Transmembrane protein C257L (257 aa).

A run of 2 helical transmembrane segments spans residues 123-143 (LELLGYSPTPIIGGDFMFTAL) and 163-183 (MMIFFLIILLCVILGIFYVLV).

It belongs to the asfivirus C257R family.

It is found in the host membrane. The protein resides in the virion. This is Transmembrane protein C257L from African swine fever virus (isolate Tick/South Africa/Pretoriuskop Pr4/1996) (ASFV).